We begin with the raw amino-acid sequence, 66 residues long: Beta-toxin Cbo4 (66 aa).

The region spanning 1-66 (KEGYIVDYHT…VWPLPNKRCK (66 aa)) is the LCN-type CS-alpha/beta domain. 4 disulfide bridges follow: Cys12–Cys65, Cys16–Cys41, Cys25–Cys46, and Cys29–Cys48. A Lysine amide modification is found at Lys66.

Belongs to the long (4 C-C) scorpion toxin superfamily. Sodium channel inhibitor family. Beta subfamily. As to expression, expressed by the venom gland.

Its subcellular location is the secreted. Functionally, beta toxins bind voltage-independently at site-4 of sodium channels and shift the voltage of activation toward more negative potentials thereby affecting sodium channel activation and promoting spontaneous and repetitive firing. Is active on the human voltage-gated sodium channels Nav1.4/SCN4A, Nav1.5/SCN5A and Nav1.6/SCN8A when tested at 200 nM. In vivo, is toxic to mice when intraperitoneally injected. In Centruroides bonito (Scorpion), this protein is Beta-toxin Cbo4.